The following is a 353-amino-acid chain: Deoxyribonuclease-2-alpha (353 aa).

A signal peptide spans 1 to 19; sequence MATLRSLLLAALLWVPAEA. An intrachain disulfide couples Cys22 to Cys161. N-linked (GlcNAc...) asparagine glycans are attached at residues Asn71, Asn88, Asn214, and Asn268. Cystine bridges form between Cys269-Cys349 and Cys310-Cys329. His297 is a catalytic residue.

It belongs to the DNase II family. As to expression, highly expressed in fetal liver macrophages.

It localises to the lysosome. It carries out the reaction Endonucleolytic cleavage to nucleoside 3'-phosphates and 3'-phosphooligonucleotide end-products.. Its function is as follows. Hydrolyzes DNA under acidic conditions with a preference for double-stranded DNA. Plays a major role in the clearance of nucleic acids generated through apoptosis, hence preventing autoinflammation. Necessary for proper fetal development and for definitive erythropoiesis in fetal liver and bone marrow, where it degrades nuclear DNA expelled from erythroid precursor cells. The sequence is that of Deoxyribonuclease-2-alpha (Dnase2) from Mus musculus (Mouse).